Here is a 704-residue protein sequence, read N- to C-terminus: Glycogen [starch] synthase, liver (704 aa).

Residue S8 is modified to Phosphoserine; by AMPK and PKA. Phosphoserine is present on S11. K40 is a binding site for UDP. Residues H205 and R211 each contribute to the UDP-alpha-D-glucose site. Alpha-D-glucose 6-phosphate-binding residues include H291, E292, Q294, H297, and K301. Residue R331 participates in UDP binding. Residue R331 participates in UDP-alpha-D-glucose binding. H501 is a binding site for alpha-D-glucose 6-phosphate. UDP-alpha-D-glucose contacts are provided by E510, W512, and G513. T515 serves as a coordination point for UDP. The alpha-D-glucose 6-phosphate site is built by R582 and R586. A disordered region spans residues K620–N704. At S627 the chain carries Phosphoserine. Residues S641, S645, S649, and S653 each carry the phosphoserine; by GSK3-alpha and GSK3-beta modification. Low complexity predominate over residues S647 to S657. Position 657 is a phosphoserine; by CK2 (S657). Positions D658–A675 are enriched in acidic residues. At S684 the chain carries Phosphoserine.

The protein belongs to the glycosyltransferase 3 family. In terms of assembly, part of the glycogen synthase (GS)-glycogenin complex, a heterooctamer composed of a tetramer of GS and 2 dimers of glycogenin, where each GS protomer binds to one glycogenin subunit (via glycogenin C-terminus); the GS tetramer may dissociate from glycogenin dimers to continue glycogen polymerization on its own. May also form a heterooctamer complex with GYG1 (via GYG1 C-terminus). Post-translationally, phosphorylation reduces the activity towards UDP-alpha-D-glucose. Primed phosphorylation at Ser-657 (site 5) by CSNK2A1 and CSNK2A2 is required for inhibitory phosphorylation at Ser-641 (site 3a), Ser-645 (site 3b), Ser-649 (site 3c) and Ser-653 (site 4) by GSK3A an GSK3B. Dephosphorylation at Ser-641 and Ser-645 by PP1 activates the enzyme. Phosphorylation at Ser-8 is not required for interaction with GYG1. Interaction with GYG1 does not regulate the phosphorylation at Ser-8 and Ser-641. In terms of tissue distribution, specifically expressed in liver.

The enzyme catalyses [(1-&gt;4)-alpha-D-glucosyl](n) + UDP-alpha-D-glucose = [(1-&gt;4)-alpha-D-glucosyl](n+1) + UDP + H(+). It participates in glycan biosynthesis; glycogen biosynthesis. Its activity is regulated as follows. Allosteric activation by glucose-6-phosphate. Phosphorylation reduces the activity towards UDP-glucose. When in the non-phosphorylated state, glycogen synthase does not require glucose-6-phosphate as an allosteric activator; when phosphorylated it does. Functionally, glycogen synthase participates in the glycogen biosynthetic process along with glycogenin and glycogen branching enzyme. Extends the primer composed of a few glucose units formed by glycogenin by adding new glucose units to it. In this context, glycogen synthase transfers the glycosyl residue from UDP-Glc to the non-reducing end of alpha-1,4-glucan. The chain is Glycogen [starch] synthase, liver from Mus musculus (Mouse).